Reading from the N-terminus, the 157-residue chain is uncharacterized protein (157 aa).

The first 17 residues, 1 to 17 (MSMKTKAAFHLVLFGLA), serve as a signal peptide directing secretion. Cysteine 18 carries N-palmitoyl cysteine lipidation. Cysteine 18 carries the S-diacylglycerol cysteine lipid modification. A run of 3 helical transmembrane segments spans residues 42–64 (MVFD…YLYL), 98–120 (ASYI…YPLF), and 124–146 (IPFF…YVIS).

Its subcellular location is the cell membrane. This is an uncharacterized protein from Bacillus subtilis (strain 168).